The following is a 175-amino-acid chain: ATP synthase subunit d, mitochondrial (175 aa).

Ser-2 is subject to N-acetylserine.

As to quaternary structure, F-type ATP synthases have 2 components, the catalytic core F(1) and the membrane-embedded component F(0), linked together by a central stalk and a peripheral stalk. The central stalk, also called rotor shaft, is often seen as part of F(1). The peripheral stalk is seen as part of F(0). F(0) contains the membrane channel next to the rotor. F-type ATP synthases form dimers but each monomer functions independently in ATP generation. The dimer consists of 18 different polypeptides: ATP1 (subunit alpha, part of F(1), 3 molecules per monomer), ATP2 (subunit beta, part of F(1), 3 molecules per monomer), ATP3 (subunit gamma, part of the central stalk), ATP4 (subunit b, part of the peripheral stalk), ATP5/OSCP (subunit 5/OSCP, part of the peripheral stalk), ATP6 (subunit a, part of the peripheral stalk), ATP7 (subunit d, part of the peripheral stalk), ATP8 (subunit 8, part of the peripheral stalk), OLI1 (subunit c, part of the rotor, 10 molecules per monomer), ATP14 (subunit h, part of the peripheral stalk), ATP15 (subunit epsilon, part of the central stalk), ATP16 (subunit delta, part of the central stalk), ATP17 (subunit f, part of the peripheral stalk), ATP18 (subunit i/j, part of the peripheral stalk). Dimer-specific subunits are ATP19 (subunit k, at interface between monomers), ATP20 (subunit g, at interface between monomers), TIM11 (subunit e, at interface between monomers). Also contains subunit L.

The protein localises to the mitochondrion inner membrane. Its function is as follows. Mitochondrial membrane ATP synthase (F(1)F(0) ATP synthase or Complex V) produces ATP from ADP in the presence of a proton gradient across the membrane which is generated by electron transport complexes of the respiratory chain. F-type ATP synthases consist of two structural domains, F(1) - containing the extramembraneous catalytic core, and F(0) - containing the membrane proton channel, linked together by a central stalk and a peripheral stalk. During catalysis, ATP synthesis in the catalytic domain of F(1) is coupled via a rotary mechanism of the central stalk subunits to proton translocation. Part of the complex F(0) domain and the peripheral stalk, which acts as a stator to hold the catalytic alpha/ATP1(3)beta/ATP2(3) subcomplex and subunit a/ATP6 static relative to the rotary elements. The polypeptide is ATP synthase subunit d, mitochondrial (Pichia angusta (Yeast)).